The chain runs to 60 residues: Large ribosomal subunit protein uL30 (60 aa).

Belongs to the universal ribosomal protein uL30 family. As to quaternary structure, part of the 50S ribosomal subunit.

This is Large ribosomal subunit protein uL30 from Flavobacterium johnsoniae (strain ATCC 17061 / DSM 2064 / JCM 8514 / BCRC 14874 / CCUG 350202 / NBRC 14942 / NCIMB 11054 / UW101) (Cytophaga johnsonae).